We begin with the raw amino-acid sequence, 65 residues long: Beta-defensin 106A (65 aa).

A signal peptide spans 1–20; sequence MRTFLFLFAVLFFLTPAKNA. Intrachain disulfides connect Cys26–Cys53, Cys33–Cys47, and Cys37–Cys54.

This sequence belongs to the beta-defensin family. Monomer. Interacts with CCR2 (via extracellular N-terminal region); this interaction may preferentially require specific tyrosine sulfation on CCR2.

It localises to the secreted. It is found in the membrane. In terms of biological role, has antibacterial activity. Acts as a ligand for C-C chemokine receptor CCR2. The protein is Beta-defensin 106A (DEFB106A) of Gorilla gorilla gorilla (Western lowland gorilla).